The sequence spans 759 residues: Phosphoribosylformylglycinamidine synthase subunit PurL (759 aa).

The active site involves His-61. Positions 64 and 105 each coordinate ATP. A Mg(2+)-binding site is contributed by Glu-107. Substrate-binding positions include 108–111 (SHNH) and Arg-130. His-109 acts as the Proton acceptor in catalysis. Asp-131 is a binding site for Mg(2+). A substrate-binding site is contributed by Gln-260. Asp-288 contacts Mg(2+). Position 332 to 334 (332 to 334 (ESQ)) interacts with substrate. Asp-520 and Gly-557 together coordinate ATP. Asn-558 provides a ligand contact to Mg(2+). Ser-560 is a substrate binding site.

The protein belongs to the FGAMS family. In terms of assembly, monomer. Part of the FGAM synthase complex composed of 1 PurL, 1 PurQ and 2 PurS subunits.

It localises to the cytoplasm. The catalysed reaction is N(2)-formyl-N(1)-(5-phospho-beta-D-ribosyl)glycinamide + L-glutamine + ATP + H2O = 2-formamido-N(1)-(5-O-phospho-beta-D-ribosyl)acetamidine + L-glutamate + ADP + phosphate + H(+). It functions in the pathway purine metabolism; IMP biosynthesis via de novo pathway; 5-amino-1-(5-phospho-D-ribosyl)imidazole from N(2)-formyl-N(1)-(5-phospho-D-ribosyl)glycinamide: step 1/2. Functionally, part of the phosphoribosylformylglycinamidine synthase complex involved in the purines biosynthetic pathway. Catalyzes the ATP-dependent conversion of formylglycinamide ribonucleotide (FGAR) and glutamine to yield formylglycinamidine ribonucleotide (FGAM) and glutamate. The FGAM synthase complex is composed of three subunits. PurQ produces an ammonia molecule by converting glutamine to glutamate. PurL transfers the ammonia molecule to FGAR to form FGAM in an ATP-dependent manner. PurS interacts with PurQ and PurL and is thought to assist in the transfer of the ammonia molecule from PurQ to PurL. The chain is Phosphoribosylformylglycinamidine synthase subunit PurL from Thermoplasma volcanium (strain ATCC 51530 / DSM 4299 / JCM 9571 / NBRC 15438 / GSS1).